A 225-amino-acid chain; its full sequence is Methylthioribulose-1-phosphate dehydratase (225 aa).

2 residues coordinate Zn(2+): His-106 and His-108.

Belongs to the aldolase class II family. MtnB subfamily. Zn(2+) serves as cofactor.

The enzyme catalyses 5-(methylsulfanyl)-D-ribulose 1-phosphate = 5-methylsulfanyl-2,3-dioxopentyl phosphate + H2O. It functions in the pathway amino-acid biosynthesis; L-methionine biosynthesis via salvage pathway; L-methionine from S-methyl-5-thio-alpha-D-ribose 1-phosphate: step 2/6. Its function is as follows. Catalyzes the dehydration of methylthioribulose-1-phosphate (MTRu-1-P) into 2,3-diketo-5-methylthiopentyl-1-phosphate (DK-MTP-1-P). In Xanthomonas oryzae pv. oryzae (strain PXO99A), this protein is Methylthioribulose-1-phosphate dehydratase.